The chain runs to 122 residues: Large ribosomal subunit protein uL14 (122 aa).

Belongs to the universal ribosomal protein uL14 family. In terms of assembly, part of the 50S ribosomal subunit. Forms a cluster with proteins L3 and L19. In the 70S ribosome, L14 and L19 interact and together make contacts with the 16S rRNA in bridges B5 and B8.

Binds to 23S rRNA. Forms part of two intersubunit bridges in the 70S ribosome. The polypeptide is Large ribosomal subunit protein uL14 (Nitrobacter winogradskyi (strain ATCC 25391 / DSM 10237 / CIP 104748 / NCIMB 11846 / Nb-255)).